The primary structure comprises 1071 residues: Exportin-1 (1071 aa).

Positions 1–679 (MPAIMTMLAD…QQATKNVDIL (679 aa)) are necessary for HTLV-1 Rex-mediated mRNA export. An Importin N-terminal domain is found at 46 to 112 (AQEVLTHLKE…KKYVVGLIIK (67 aa)). 6 HEAT repeats span residues 217 to 240 (QNAP…PLGY), 241 to 277 (IFET…VSVS), 354 to 472 (MLLV…YVDT), 515 to 553 (RFLV…QYPR), 560 to 597 (KFLK…KCRR), and 602 to 639 (VQVG…AVGY). The tract at residues 327–450 (CTFLKEHDQL…VREFMKDTDS (124 aa)) is interaction with Ran and nuclear export complex formation. Position 391 is a phosphoserine (Ser391). A necessary for HTLV-1 Rex multimerization region spans residues 411–414 (PMLF). The tract at residues 411 to 481 (PMLFKVRLLM…TERIMTEKLH (71 aa)) is interaction with RANBP3. The residue at position 446 (Lys446) is an N6-acetyllysine. Phosphothreonine is present on Thr448. A Phosphoserine modification is found at Ser450. Tyr454 is subject to Phosphotyrosine. Lys693 bears the N6-acetyllysine mark. 4 HEAT repeats span residues 775–813 (NFVP…KLGG), 885–916 (TMRN…SFYQ), 917–954 (TYFC…NLVE), and 1002–1039 (FSLN…EERE). Positions 800-820 (VLSTMAIIVNKLGGHITAEIP) are interaction with HIV-1 Rev. A Phosphoserine modification is found at Ser1031.

This sequence belongs to the exportin family. Found in a U snRNA export complex with PHAX/RNUXA, NCBP1/CBP80, NCBP2/CBP20, RAN, XPO1 and m7G-capped RNA. Component of a nuclear export receptor complex composed of KPNB1, RAN, SNUPN and XPO1. Found in a trimeric export complex with SNUPN, RAN and XPO1. Found in a nuclear export complex with RANBP3 and RAN. Found in a 60S ribosomal subunit export complex with NMD3, RAN, XPO1. Interacts with DDX3X, NMD3, NUP42, NUP88, NUP214, RANBP3 and TERT. Interacts with NEMF (via its N-terminus). Interacts with the monomeric form of BIRC5/survivin deacetylated at 'Lys-129'. Interacts with DTNBP1 and SERTAD2; the interactions translocate DTNBP1 and SERTAD2 out of the nucleus. Interacts with ATF2. Interacts with SLC35G1 and STIM1. Interacts with DCAF8. Interacts with CPEB3. Interacts with HAX1. Interacts with BOK; translocates to the cytoplasm. Interacts with HSP90AB1. Interacts with LRPPRC; interacts with LRPPRC alone and also when LRPPRC is in complex with EIF4E and with EIF4E sensitivity element (4ESE)-containing mRNAs to form an EIF4E-dependent mRNA export complex. In terms of assembly, (Microbial infection) Interacts with HIV-1 Rev. As to quaternary structure, (Microbial infection) Interacts with HTLV-1 Rex. (Microbial infection) Interacts with influenza A nucleoprotein. In terms of assembly, (Microbial infection) Interacts with Epstein-Barr virus protein BMLF1. As to quaternary structure, (Microbial infection) Part of a tetrameric complex composed of CRM1, importin alpha/beta dimer and the Venezuelan equine encephalitis virus (VEEV) capsid; this complex blocks the receptor-mediated transport through the nuclear pore. (Microbial infection) Interacts with SARS-CoV virus protein ORF9b; this interaction mediates protein ORF9b export out of the nucleus. In terms of tissue distribution, expressed in heart, brain, placenta, lung, liver, skeletal muscle, pancreas, spleen, thymus, prostate, testis, ovary, small intestine, colon and peripheral blood leukocytes. Not expressed in the kidney.

It is found in the cytoplasm. The protein resides in the nucleus. Its subcellular location is the nucleoplasm. The protein localises to the cajal body. It localises to the nucleolus. Its function is as follows. Mediates the nuclear export of cellular proteins (cargos) bearing a leucine-rich nuclear export signal (NES) and of RNAs. In the nucleus, in association with RANBP3, binds cooperatively to the NES on its target protein and to the GTPase RAN in its active GTP-bound form (Ran-GTP). Docking of this complex to the nuclear pore complex (NPC) is mediated through binding to nucleoporins. Upon transit of a nuclear export complex into the cytoplasm, disassembling of the complex and hydrolysis of Ran-GTP to Ran-GDP (induced by RANBP1 and RANGAP1, respectively) cause release of the cargo from the export receptor. The directionality of nuclear export is thought to be conferred by an asymmetric distribution of the GTP- and GDP-bound forms of Ran between the cytoplasm and nucleus. Involved in U3 snoRNA transport from Cajal bodies to nucleoli. Binds to late precursor U3 snoRNA bearing a TMG cap. In terms of biological role, (Microbial infection) Mediates the export of unspliced or incompletely spliced RNAs out of the nucleus from different viruses including HIV-1, HTLV-1 and influenza A. Interacts with, and mediates the nuclear export of HIV-1 Rev and HTLV-1 Rex proteins. Involved in HTLV-1 Rex multimerization. In Homo sapiens (Human), this protein is Exportin-1 (XPO1).